The following is a 131-amino-acid chain: D-ribose pyranase (131 aa).

The Proton donor role is filled by H20. Residues D28, H98, and 120-122 contribute to the substrate site; that span reads YAN.

Belongs to the RbsD / FucU family. RbsD subfamily. As to quaternary structure, homodecamer.

Its subcellular location is the cytoplasm. The enzyme catalyses beta-D-ribopyranose = beta-D-ribofuranose. Its pathway is carbohydrate metabolism; D-ribose degradation; D-ribose 5-phosphate from beta-D-ribopyranose: step 1/2. Its function is as follows. Catalyzes the interconversion of beta-pyran and beta-furan forms of D-ribose. This chain is D-ribose pyranase, found in Clostridium botulinum (strain Eklund 17B / Type B).